The sequence spans 530 residues: 2,3-bisphosphoglycerate-independent phosphoglycerate mutase (530 aa).

Asp15 and Ser65 together coordinate Mn(2+). Ser65 acts as the Phosphoserine intermediate in catalysis. Substrate is bound by residues His126, 155 to 156, Arg187, Arg193, 257 to 260, and Lys330; these read RD and RPDR. 5 residues coordinate Mn(2+): Asp397, His401, Asp438, His439, and His456.

Belongs to the BPG-independent phosphoglycerate mutase family. Monomer. Mn(2+) serves as cofactor.

It carries out the reaction (2R)-2-phosphoglycerate = (2R)-3-phosphoglycerate. Its pathway is carbohydrate degradation; glycolysis; pyruvate from D-glyceraldehyde 3-phosphate: step 3/5. Its function is as follows. Catalyzes the interconversion of 2-phosphoglycerate and 3-phosphoglycerate. This Synechococcus sp. (strain JA-2-3B'a(2-13)) (Cyanobacteria bacterium Yellowstone B-Prime) protein is 2,3-bisphosphoglycerate-independent phosphoglycerate mutase.